The chain runs to 132 residues: Small ribosomal subunit protein uS8 (132 aa).

The protein belongs to the universal ribosomal protein uS8 family. As to quaternary structure, part of the 30S ribosomal subunit. Contacts proteins S5 and S12.

Functionally, one of the primary rRNA binding proteins, it binds directly to 16S rRNA central domain where it helps coordinate assembly of the platform of the 30S subunit. The protein is Small ribosomal subunit protein uS8 of Ureaplasma urealyticum serovar 10 (strain ATCC 33699 / Western).